The primary structure comprises 294 residues: UDP-3-O-acyl-N-acetylglucosamine deacetylase (294 aa).

Zn(2+) contacts are provided by His-75, His-232, and Asp-236. The Proton donor role is filled by His-259.

It belongs to the LpxC family. It depends on Zn(2+) as a cofactor.

The catalysed reaction is a UDP-3-O-[(3R)-3-hydroxyacyl]-N-acetyl-alpha-D-glucosamine + H2O = a UDP-3-O-[(3R)-3-hydroxyacyl]-alpha-D-glucosamine + acetate. It functions in the pathway glycolipid biosynthesis; lipid IV(A) biosynthesis; lipid IV(A) from (3R)-3-hydroxytetradecanoyl-[acyl-carrier-protein] and UDP-N-acetyl-alpha-D-glucosamine: step 2/6. Catalyzes the hydrolysis of UDP-3-O-myristoyl-N-acetylglucosamine to form UDP-3-O-myristoylglucosamine and acetate, the committed step in lipid A biosynthesis. The protein is UDP-3-O-acyl-N-acetylglucosamine deacetylase of Sulfurimonas denitrificans (strain ATCC 33889 / DSM 1251) (Thiomicrospira denitrificans (strain ATCC 33889 / DSM 1251)).